The chain runs to 386 residues: MSALEKSMHLGRLPSRPPLPGSGGSQSGAKMRMGPGRKRDFSPVPWSQYFESMEDVEVENETGKDTFRVYKSGSEGPVLLLLHGGGHSALSWAVFTAAIISRVQCRIVALDLRSHGETKVKNPEDLSAETMAKDVGNVVEAMYGDLPPPIMLIGHSMGGAIAVHTASSNLVPSLLGLCMIGVVEGTAMDALNSMQNFLRGRPKTFKSLENAIEWSVKSGQIRNLESARVSMVGQVKQCEGITSPEGSKSIVEGIIEEEEEDEEGSESISKRKKEDDMETKKDHPYTWRIELAKTEKYWDGWFRGLSNLFLSCPIPKLLLLAGVDRLDKDLTIGQMQGKFQMQVLPQCGHAVHEDAPDKVAEAVATFLIRHRFAEPIGGFQCVFPGC.

A disordered region spans residues 1-38 (MSALEKSMHLGRLPSRPPLPGSGGSQSGAKMRMGPGRK). Serine 15 bears the Phosphoserine mark. Asymmetric dimethylarginine; alternate is present on arginine 16. An Omega-N-methylarginine; alternate modification is found at arginine 16. Serine 42 carries the post-translational modification Phosphoserine. The active site involves serine 156. A compositionally biased stretch (acidic residues) spans 254 to 265 (IIEEEEEDEEGS). The segment at 254-280 (IIEEEEEDEEGSESISKRKKEDDMETK) is disordered. Over residues 268-280 (ISKRKKEDDMETK) the composition is skewed to basic and acidic residues. Histidine 349 is a catalytic residue.

Belongs to the AB hydrolase superfamily. Binds PPP2CA and PPP2CB. Post-translationally, phosphorylated by SIK1 following increases in intracellular sodium, leading to dissociation from the protein phosphatase 2A (PP2A) complex and subsequent dephosphorylation of sodium/potassium-transporting ATPase ATP1A1.

It catalyses the reaction [phosphatase 2A protein]-C-terminal L-leucine methyl ester + H2O = [phosphatase 2A protein]-C-terminal L-leucine + methanol + H(+). Its function is as follows. Demethylates proteins that have been reversibly carboxymethylated. Demethylates PPP2CB (in vitro) and PPP2CA. Binding to PPP2CA displaces the manganese ion and inactivates the enzyme. The chain is Protein phosphatase methylesterase 1 (PPME1) from Pongo abelii (Sumatran orangutan).